A 648-amino-acid polypeptide reads, in one-letter code: 1-deoxy-D-xylulose-5-phosphate synthase (648 aa).

Residues H72 and 113 to 115 (GHA) contribute to the thiamine diphosphate site. D144 contributes to the Mg(2+) binding site. Thiamine diphosphate contacts are provided by residues 145-146 (GA), N173, and E363. Mg(2+) is bound at residue N173.

Belongs to the transketolase family. DXPS subfamily. As to quaternary structure, homodimer. Mg(2+) serves as cofactor. Thiamine diphosphate is required as a cofactor.

It catalyses the reaction D-glyceraldehyde 3-phosphate + pyruvate + H(+) = 1-deoxy-D-xylulose 5-phosphate + CO2. It functions in the pathway metabolic intermediate biosynthesis; 1-deoxy-D-xylulose 5-phosphate biosynthesis; 1-deoxy-D-xylulose 5-phosphate from D-glyceraldehyde 3-phosphate and pyruvate: step 1/1. Its function is as follows. Catalyzes the acyloin condensation reaction between C atoms 2 and 3 of pyruvate and glyceraldehyde 3-phosphate to yield 1-deoxy-D-xylulose-5-phosphate (DXP). This chain is 1-deoxy-D-xylulose-5-phosphate synthase, found in Symbiobacterium thermophilum (strain DSM 24528 / JCM 14929 / IAM 14863 / T).